A 155-amino-acid polypeptide reads, in one-letter code: Gas vesicle protein K (155 aa).

The protein belongs to the gas vesicle GvpK family.

Its subcellular location is the gas vesicle. In terms of biological role, might be involved in nucleating gas vesicle formation. Gas vesicles (GV) are hollow, gas filled proteinaceous nanostructures. During planktonic growth they allow positioning of the organism at a favorable depth for light or nutrient acquisition. This chain is Gas vesicle protein K, found in Dolichospermum flosaquae (Anabaena flos-aquae).